We begin with the raw amino-acid sequence, 213 residues long: FMN-dependent NADH:quinone oxidoreductase 1 (213 aa).

18 to 20 is an FMN binding site; that stretch reads SVS.

This sequence belongs to the azoreductase type 1 family. As to quaternary structure, homodimer. FMN serves as cofactor.

The catalysed reaction is 2 a quinone + NADH + H(+) = 2 a 1,4-benzosemiquinone + NAD(+). It carries out the reaction N,N-dimethyl-1,4-phenylenediamine + anthranilate + 2 NAD(+) = 2-(4-dimethylaminophenyl)diazenylbenzoate + 2 NADH + 2 H(+). In terms of biological role, quinone reductase that provides resistance to thiol-specific stress caused by electrophilic quinones. Also exhibits azoreductase activity. Catalyzes the reductive cleavage of the azo bond in aromatic azo compounds to the corresponding amines. This Bacillus cereus (strain ZK / E33L) protein is FMN-dependent NADH:quinone oxidoreductase 1.